The sequence spans 523 residues: Putative oxidoreductase TDA3 (523 aa).

The span at 157-172 shows a compositional bias: low complexity; sequence NSSLSSSGSSLKNDSA. A disordered region spans residues 157-189; the sequence is NSSLSSSGSSLKNDSASNEEEGSDIHVSSSVPS. Phosphoserine occurs at positions 189, 204, and 306.

It belongs to the TDA3 family. Interacts with BTN2.

Its subcellular location is the cytoplasm. It localises to the late endosome. Functionally, putative oxidoreductase that negatively regulates the retrieval of cargo from late endosomes to the Golgi. Regulates YIF1 and KEX2 localization. Required for fast DNA replication. This is Putative oxidoreductase TDA3 (TDA3) from Saccharomyces cerevisiae (strain ATCC 204508 / S288c) (Baker's yeast).